We begin with the raw amino-acid sequence, 229 residues long: MAWSFRAKVQLGGLLLSLLGWVCSCVTTILPQWKTLNLELNEMETWIMGIWEVCVDREEVATVCKAFESFLSLPQELQVARILMVASHGLGLLGLLLCSFGSECFQFHRIRWVFKRRLGLLGRTLEASASATTLLPVSWVAHATIQDFWDDSIPDIIPRWEFGGALYLGWAAGIFLALGGLLLIFSACLGKEDVPFPLMAGPTVPLSCAPVEESDGSFHLMLRPRNLVI.

Residues M1–Q10 lie on the Cytoplasmic side of the membrane. A helical membrane pass occupies residues L11–P31. Topologically, residues Q32–R81 are extracellular. A helical transmembrane segment spans residues I82 to S102. Over E103–T124 the chain is Cytoplasmic. Residues L125 to I145 traverse the membrane as a helical segment. Topologically, residues Q146–G164 are extracellular. The chain crosses the membrane as a helical span at residues A165–F185. At S186–I229 the chain is on the cytoplasmic side.

The protein belongs to the claudin family.

The protein localises to the cell junction. It localises to the tight junction. Its subcellular location is the cell membrane. In terms of biological role, plays a major role in tight junction-specific obliteration of the intercellular space, through calcium-independent cell-adhesion activity. The sequence is that of Claudin-25 (CLDN25) from Homo sapiens (Human).